Reading from the N-terminus, the 311-residue chain is MSLSIIFMGTPEFSVPTLRLLVDAGHRIVAVYTQPPRPGGRRGLDLQKSPVHQAAELLGLPVFTPVNFKDPEERERFAALKADVAVVVAYGLLLPEAVLNGTRDGCYNGHASLLPRWRGAAPIQRAIMAGDAETGMMVMKMDKGLDTGAVALTRKVEIGPNMTAGELHDRLMQVGAKAMAEAMVKLEMNDLPLTPQPQDGVLYAAKIDKAETRIDFARPALDVHNHIRGLAPFPGAWFELEIGGKPERVKVLGSELAEGQGAAGELLTDDLVVACASGAVRLTRLQKAGGKPLAAADFLRGTPLAAGMRLS.

112 to 115 (SLLP) is a (6S)-5,6,7,8-tetrahydrofolate binding site.

The protein belongs to the Fmt family.

It carries out the reaction L-methionyl-tRNA(fMet) + (6R)-10-formyltetrahydrofolate = N-formyl-L-methionyl-tRNA(fMet) + (6S)-5,6,7,8-tetrahydrofolate + H(+). Attaches a formyl group to the free amino group of methionyl-tRNA(fMet). The formyl group appears to play a dual role in the initiator identity of N-formylmethionyl-tRNA by promoting its recognition by IF2 and preventing the misappropriation of this tRNA by the elongation apparatus. This chain is Methionyl-tRNA formyltransferase, found in Rhizobium leguminosarum bv. trifolii (strain WSM2304).